The following is a 163-amino-acid chain: MGKRNLDETMNESAVSEIAEDVAALTTEKDEYQALCELVNPIAQPLANRKLAKKVYKLIKKAAAGEKTLREGIKDVQKELRKNEKGICILAGNVSPIDVYSHIPAICEEKEIPYVYIPSREQLGLAVGHRRPSILIFVKPSADFQELYDEVAETLHHLTVDAA.

Belongs to the eukaryotic ribosomal protein eL8 family. As to quaternary structure, component of the small nucleolar ribonucleoprotein particle containing H/ACA-type snoRNAs (H/ACA snoRNPs).

The protein resides in the nucleus. It localises to the nucleolus. Functionally, required for ribosome biogenesis. Part of a complex which catalyzes pseudouridylation of rRNA. This involves the isomerization of uridine such that the ribose is subsequently attached to C5, instead of the normal N1. Pseudouridine ('psi') residues may serve to stabilize the conformation of rRNAs. This is Putative H/ACA ribonucleoprotein complex subunit 2-like protein from Caenorhabditis briggsae.